A 621-amino-acid polypeptide reads, in one-letter code: 1,4-alpha-glucan branching enzyme GlgB (621 aa).

Asp-302 acts as the Nucleophile in catalysis. Catalysis depends on Glu-355, which acts as the Proton donor.

Belongs to the glycosyl hydrolase 13 family. GlgB subfamily. In terms of assembly, monomer.

The enzyme catalyses Transfers a segment of a (1-&gt;4)-alpha-D-glucan chain to a primary hydroxy group in a similar glucan chain.. The protein operates within glycan biosynthesis; glycogen biosynthesis. Catalyzes the formation of the alpha-1,6-glucosidic linkages in glycogen by scission of a 1,4-alpha-linked oligosaccharide from growing alpha-1,4-glucan chains and the subsequent attachment of the oligosaccharide to the alpha-1,6 position. This Dechloromonas aromatica (strain RCB) protein is 1,4-alpha-glucan branching enzyme GlgB.